Here is a 220-residue protein sequence, read N- to C-terminus: GTP cyclohydrolase 1 (220 aa).

3 residues coordinate Zn(2+): cysteine 110, histidine 113, and cysteine 181.

Belongs to the GTP cyclohydrolase I family. Toroid-shaped homodecamer, composed of two pentamers of five dimers.

The enzyme catalyses GTP + H2O = 7,8-dihydroneopterin 3'-triphosphate + formate + H(+). It functions in the pathway cofactor biosynthesis; 7,8-dihydroneopterin triphosphate biosynthesis; 7,8-dihydroneopterin triphosphate from GTP: step 1/1. This chain is GTP cyclohydrolase 1, found in Baumannia cicadellinicola subsp. Homalodisca coagulata.